The sequence spans 217 residues: Small ribosomal subunit protein uS3 (217 aa).

Residues 38 to 106 (IRKFIQKELA…QVHINIVEIK (69 aa)) enclose the KH type-2 domain.

It belongs to the universal ribosomal protein uS3 family. As to quaternary structure, part of the 30S ribosomal subunit. Forms a tight complex with proteins S10 and S14.

Its function is as follows. Binds the lower part of the 30S subunit head. Binds mRNA in the 70S ribosome, positioning it for translation. The sequence is that of Small ribosomal subunit protein uS3 from Streptococcus thermophilus (strain CNRZ 1066).